The chain runs to 183 residues: Holliday junction branch migration complex subunit RuvA (183 aa).

A domain I region spans residues 1–64 (MIVAIEGIVS…EDSHKLYGFL (64 aa)). A domain II region spans residues 65–138 (DTNEQRMFEL…SDAKINIENS (74 aa)). Position 138 (serine 138) is a region of interest, flexible linker. Positions 138–183 (SNQDHAQALAALLSLGFKQENILKVLRTCESQNTSELIKEALKKLA) are domain III.

Belongs to the RuvA family. As to quaternary structure, homotetramer. Forms an RuvA(8)-RuvB(12)-Holliday junction (HJ) complex. HJ DNA is sandwiched between 2 RuvA tetramers; dsDNA enters through RuvA and exits via RuvB. An RuvB hexamer assembles on each DNA strand where it exits the tetramer. Each RuvB hexamer is contacted by two RuvA subunits (via domain III) on 2 adjacent RuvB subunits; this complex drives branch migration. In the full resolvosome a probable DNA-RuvA(4)-RuvB(12)-RuvC(2) complex forms which resolves the HJ.

It localises to the cytoplasm. Its function is as follows. The RuvA-RuvB-RuvC complex processes Holliday junction (HJ) DNA during genetic recombination and DNA repair, while the RuvA-RuvB complex plays an important role in the rescue of blocked DNA replication forks via replication fork reversal (RFR). RuvA specifically binds to HJ cruciform DNA, conferring on it an open structure. The RuvB hexamer acts as an ATP-dependent pump, pulling dsDNA into and through the RuvAB complex. HJ branch migration allows RuvC to scan DNA until it finds its consensus sequence, where it cleaves and resolves the cruciform DNA. This Campylobacter lari (strain RM2100 / D67 / ATCC BAA-1060) protein is Holliday junction branch migration complex subunit RuvA.